Consider the following 233-residue polypeptide: Nickel import system ATP-binding protein NikE (233 aa).

Residues 2–228 enclose the ABC transporter domain; that stretch reads IELKHVTFGY…DRHPYTKELV (227 aa). 35–42 lines the ATP pocket; that stretch reads GESGCGKS.

It belongs to the ABC transporter superfamily. In terms of assembly, the complex is composed of two ATP-binding proteins (NikD and NikE), two transmembrane proteins (NikB and NikC) and a solute-binding protein (NikA).

The protein resides in the cell membrane. It carries out the reaction Ni(2+)(out) + ATP + H2O = Ni(2+)(in) + ADP + phosphate + H(+). Functionally, part of the ABC transporter complex NikABCDE (Opp2) involved in nickel import. Probably responsible for energy coupling to the transport system. This is Nickel import system ATP-binding protein NikE from Staphylococcus aureus (strain MRSA252).